A 156-amino-acid polypeptide reads, in one-letter code: Small ribosomal subunit protein uS7 (156 aa).

The protein belongs to the universal ribosomal protein uS7 family. As to quaternary structure, part of the 30S ribosomal subunit. Contacts proteins S9 and S11.

In terms of biological role, one of the primary rRNA binding proteins, it binds directly to 16S rRNA where it nucleates assembly of the head domain of the 30S subunit. Is located at the subunit interface close to the decoding center, probably blocks exit of the E-site tRNA. The chain is Small ribosomal subunit protein uS7 from Mycolicibacterium smegmatis (strain ATCC 700084 / mc(2)155) (Mycobacterium smegmatis).